The following is a 190-amino-acid chain: MIEVTRETKETQISVKLNLYGKGQAKIDTGVGFFDHMLEAFTKHAHIDMEVTCTGDTHIDDHHTVEDVGIVIGQALREAIYPVKSIERFGNATVVMDEASVTCDIDLSNRGFLVFELPIGGKVGEFDVELVEEFFRAFAFNLPLTLHLIYNRGKNKHHIIEAAFKALAVSLRRAVAINENAGIPSTKGVL.

This sequence belongs to the imidazoleglycerol-phosphate dehydratase family.

Its subcellular location is the cytoplasm. The catalysed reaction is D-erythro-1-(imidazol-4-yl)glycerol 3-phosphate = 3-(imidazol-4-yl)-2-oxopropyl phosphate + H2O. It functions in the pathway amino-acid biosynthesis; L-histidine biosynthesis; L-histidine from 5-phospho-alpha-D-ribose 1-diphosphate: step 6/9. In Sulfurovum sp. (strain NBC37-1), this protein is Imidazoleglycerol-phosphate dehydratase.